The sequence spans 102 residues: NADH-quinone oxidoreductase subunit K (102 aa).

3 helical membrane passes run 6-26 (MEHG…GLLI), 30-50 (LLFI…AFVV), and 65-85 (ILVI…LLLL).

It belongs to the complex I subunit 4L family. NDH-1 is composed of 14 different subunits. Subunits NuoA, H, J, K, L, M, N constitute the membrane sector of the complex.

It is found in the cell inner membrane. It catalyses the reaction a quinone + NADH + 5 H(+)(in) = a quinol + NAD(+) + 4 H(+)(out). In terms of biological role, NDH-1 shuttles electrons from NADH, via FMN and iron-sulfur (Fe-S) centers, to quinones in the respiratory chain. The immediate electron acceptor for the enzyme in this species is believed to be ubiquinone. Couples the redox reaction to proton translocation (for every two electrons transferred, four hydrogen ions are translocated across the cytoplasmic membrane), and thus conserves the redox energy in a proton gradient. The sequence is that of NADH-quinone oxidoreductase subunit K from Aeromonas hydrophila subsp. hydrophila (strain ATCC 7966 / DSM 30187 / BCRC 13018 / CCUG 14551 / JCM 1027 / KCTC 2358 / NCIMB 9240 / NCTC 8049).